A 428-amino-acid chain; its full sequence is 3-phosphoshikimate 1-carboxyvinyltransferase (428 aa).

3-phosphoshikimate contacts are provided by lysine 22, serine 23, and arginine 27. Position 22 (lysine 22) interacts with phosphoenolpyruvate. Residues glycine 96 and arginine 124 each coordinate phosphoenolpyruvate. 7 residues coordinate 3-phosphoshikimate: serine 169, serine 170, glutamine 171, serine 197, aspartate 313, asparagine 336, and lysine 340. Residue glutamine 171 coordinates phosphoenolpyruvate. Aspartate 313 acts as the Proton acceptor in catalysis. Residues arginine 344, arginine 386, and lysine 411 each coordinate phosphoenolpyruvate.

Belongs to the EPSP synthase family. As to quaternary structure, monomer.

It is found in the cytoplasm. The enzyme catalyses 3-phosphoshikimate + phosphoenolpyruvate = 5-O-(1-carboxyvinyl)-3-phosphoshikimate + phosphate. It participates in metabolic intermediate biosynthesis; chorismate biosynthesis; chorismate from D-erythrose 4-phosphate and phosphoenolpyruvate: step 6/7. Functionally, catalyzes the transfer of the enolpyruvyl moiety of phosphoenolpyruvate (PEP) to the 5-hydroxyl of shikimate-3-phosphate (S3P) to produce enolpyruvyl shikimate-3-phosphate and inorganic phosphate. The sequence is that of 3-phosphoshikimate 1-carboxyvinyltransferase from Proteus mirabilis (strain HI4320).